We begin with the raw amino-acid sequence, 276 residues long: Imidazole glycerol phosphate synthase subunit HisF (276 aa).

Active-site residues include Asp-11 and Asp-130.

The protein belongs to the HisA/HisF family. Heterodimer of HisH and HisF.

It localises to the cytoplasm. The enzyme catalyses 5-[(5-phospho-1-deoxy-D-ribulos-1-ylimino)methylamino]-1-(5-phospho-beta-D-ribosyl)imidazole-4-carboxamide + L-glutamine = D-erythro-1-(imidazol-4-yl)glycerol 3-phosphate + 5-amino-1-(5-phospho-beta-D-ribosyl)imidazole-4-carboxamide + L-glutamate + H(+). The protein operates within amino-acid biosynthesis; L-histidine biosynthesis; L-histidine from 5-phospho-alpha-D-ribose 1-diphosphate: step 5/9. Functionally, IGPS catalyzes the conversion of PRFAR and glutamine to IGP, AICAR and glutamate. The HisF subunit catalyzes the cyclization activity that produces IGP and AICAR from PRFAR using the ammonia provided by the HisH subunit. The sequence is that of Imidazole glycerol phosphate synthase subunit HisF from Beijerinckia indica subsp. indica (strain ATCC 9039 / DSM 1715 / NCIMB 8712).